We begin with the raw amino-acid sequence, 842 residues long: Protein translocase subunit SecA (842 aa).

ATP is bound by residues glutamine 85, 103–107, and aspartate 493; that span reads GEGKT. Zn(2+)-binding residues include cysteine 825, cysteine 827, cysteine 836, and histidine 837.

The protein belongs to the SecA family. Monomer and homodimer. Part of the essential Sec protein translocation apparatus which comprises SecA, SecYEG and auxiliary proteins SecDF. Other proteins may also be involved. Requires Zn(2+) as cofactor.

The protein localises to the cell membrane. The protein resides in the cytoplasm. It catalyses the reaction ATP + H2O + cellular proteinSide 1 = ADP + phosphate + cellular proteinSide 2.. Functionally, part of the Sec protein translocase complex. Interacts with the SecYEG preprotein conducting channel. Has a central role in coupling the hydrolysis of ATP to the transfer of proteins into and across the cell membrane, serving as an ATP-driven molecular motor driving the stepwise translocation of polypeptide chains across the membrane. The protein is Protein translocase subunit SecA of Streptococcus uberis (strain ATCC BAA-854 / 0140J).